We begin with the raw amino-acid sequence, 382 residues long: DNA double-strand break repair protein Mre11 (382 aa).

Residues aspartate 8, histidine 10, aspartate 49, and aspartate 84 each coordinate Mn(2+). Histidine 85 acts as the Proton donor in catalysis. Histidine 156, histidine 187, and histidine 189 together coordinate Mn(2+).

This sequence belongs to the MRE11/RAD32 family. As to quaternary structure, homodimer. Forms a heterotetramer composed of two Mre11 subunits and two Rad50 subunits. Interacts with Rad50 and HerA. Mn(2+) serves as cofactor.

Nuclease activity is regulated by Rad50. Its function is as follows. Part of the Rad50/Mre11 complex, which is involved in the early steps of DNA double-strand break (DSB) repair. The complex may facilitate opening of the processed DNA ends to aid in the recruitment of HerA and NurA. Mre11 binds to DSB ends and has both double-stranded 3'-5' exonuclease activity and single-stranded endonuclease activity. Recruited immediately to chromosomal DNA after gamma irradiation, and remains DNA bound in the course of DNA repair. This is DNA double-strand break repair protein Mre11 from Sulfolobus acidocaldarius (strain ATCC 33909 / DSM 639 / JCM 8929 / NBRC 15157 / NCIMB 11770).